Consider the following 419-residue polypeptide: MKFTELTVTEFDNFVQNPSLESHYFQVKENIVTRENDGFEVVLLGIKDDNNKVIAASLFSKIPTMGSYVYYSNRGPVMDFSDLGLVDYYLKELDKYLQQHQCLYVKLDPYWLYHLYDKDIVPFEGREKNDALVNLFKSHGYEHHGFTTEYDTSSQVRWMGVLNLEGKTPETLKKTFDSQRKRNINKAINYGVKVRFLESDEFNLFLDLYRETEERAGFVSKTDDYFYNFIDTYGDKVLVPLAYIDLDEYVLKLQQELNDKENRRDQMMAKENKSDKQMKKIAELDKQIDHDQHELLNASELSKTDGPILNLASGVYFANAYEVNYFSGGSSEKYNQFMGPYMMHWFMINYCFDNGYDRYNFYGLSGDFTENSEDYGVYRFKRGFNVQIEELIGDFYKPIHKVKYWLFTTLDKLRKKLKK.

This sequence belongs to the FemABX family. Homodimer. Interacts with FemA.

It localises to the cytoplasm. It catalyses the reaction MurNAc-L-Ala-D-isoglutaminyl-L-Lys-(N(6)-tri-Gly)-D-Ala-D-Ala-diphospho-di-trans,octa-cis-undecaprenyl-GlcNAc + 2 glycyl-tRNA(Gly) = MurNAc-L-Ala-D-isoglutaminyl-L-Lys-(N(6)-penta-Gly)-D-Ala-D-Ala-diphospho-di-trans,octa-cis-undecaprenyl-GlcNAc + 2 tRNA(Gly) + 2 H(+). Its function is as follows. Catalyzes the formation of the pentaglycine interpeptide bridge, which is characteristic of the S.aureus peptidoglycan. Adds glycines 4 and 5 of the pentaglycine bridge, using glycyl-tRNA(Gly) as donor. Involved in resistance to methicillin. This chain is Aminoacyltransferase FemB (femB), found in Staphylococcus aureus (strain MW2).